Here is a 286-residue protein sequence, read N- to C-terminus: ATP synthase gamma chain (286 aa).

The protein belongs to the ATPase gamma chain family. As to quaternary structure, F-type ATPases have 2 components, CF(1) - the catalytic core - and CF(0) - the membrane proton channel. CF(1) has five subunits: alpha(3), beta(3), gamma(1), delta(1), epsilon(1). CF(0) has three main subunits: a, b and c.

Its subcellular location is the cell inner membrane. Produces ATP from ADP in the presence of a proton gradient across the membrane. The gamma chain is believed to be important in regulating ATPase activity and the flow of protons through the CF(0) complex. The polypeptide is ATP synthase gamma chain (Shewanella denitrificans (strain OS217 / ATCC BAA-1090 / DSM 15013)).